The primary structure comprises 605 residues: Pescadillo homolog (605 aa).

The segment at Lys51–Ser484 is sufficient for interaction with ERB1. Ser288 is modified (phosphoserine). The stretch at Leu294–Lys342 forms a coiled coil. Positions Ala297–Lys342 are disordered. Residues Ala303–Glu312 are compositionally biased toward acidic residues. Thr308 carries the phosphothreonine modification. Residues Glu313 to Asn327 are compositionally biased toward basic and acidic residues. The region spanning Pro355–Pro449 is the BRCT domain. The disordered stretch occupies residues Pro459 to Lys605. The segment covering Glu473–Leu510 has biased composition (acidic residues). Residues Glu530–Lys605 adopt a coiled-coil conformation. The span at Lys562–Lys571 shows a compositional bias: basic residues. A compositionally biased stretch (basic and acidic residues) spans Ala575–Leu584. The span at Lys585–Leu598 shows a compositional bias: basic residues.

It belongs to the pescadillo family. In terms of assembly, component of the NOP7 complex, composed of ERB1, NOP7 and YTM1. The complex is held together by ERB1, which interacts with NOP7 via its N-terminal domain and with YTM1 via a high-affinity interaction between the seven-bladed beta-propeller domains of the 2 proteins. The NOP7 complex associates with the 66S pre-ribosome.

The protein localises to the nucleus. The protein resides in the nucleolus. It localises to the nucleoplasm. In terms of biological role, component of the NOP7 complex, which is required for maturation of the 25S and 5.8S ribosomal RNAs and formation of the 60S ribosome. The protein is Pescadillo homolog of Saccharomyces cerevisiae (strain YJM789) (Baker's yeast).